The sequence spans 514 residues: 1-pyrroline-5-carboxylate dehydrogenase (514 aa).

Catalysis depends on residues glutamate 286 and cysteine 320.

This sequence belongs to the aldehyde dehydrogenase family. RocA subfamily.

The catalysed reaction is L-glutamate 5-semialdehyde + NAD(+) + H2O = L-glutamate + NADH + 2 H(+). It functions in the pathway amino-acid degradation; L-proline degradation into L-glutamate; L-glutamate from L-proline: step 2/2. The chain is 1-pyrroline-5-carboxylate dehydrogenase from Staphylococcus aureus (strain MSSA476).